Consider the following 369-residue polypeptide: Transmembrane protein adipocyte-associated 1 (369 aa).

N-linked (GlcNAc...) asparagine glycosylation is present at Asn-20. Helical transmembrane passes span 45 to 65, 73 to 93, 120 to 140, 148 to 168, 189 to 209, 237 to 257, and 262 to 282; these read LLLL…LPLA, SSPI…VGIA, FFLL…GHLE, VLAI…TLEI, QFWL…VILP, LLQG…LCCV, and FLYF…GFFG. The N-linked (GlcNAc...) asparagine glycan is linked to Asn-329.

The protein belongs to the UPF0359 family. In terms of tissue distribution, ubiquitous, with higher levels in heart, brain, lung, liver and kidney.

The protein localises to the membrane. This is Transmembrane protein adipocyte-associated 1 (Tpra1) from Mus musculus (Mouse).